Consider the following 384-residue polypeptide: Deoxyguanosinetriphosphate triphosphohydrolase-like protein (384 aa).

Positions 12–39 are disordered; that stretch reads ELASYASDPSKTRGRRHSEPPPENRTEF. Positions 28-39 are enriched in basic and acidic residues; the sequence is HSEPPPENRTEF. One can recognise an HD domain in the interval 73–208; it reads RLTHSLEVAQ…ANLADEVAYN (136 aa).

The protein belongs to the dGTPase family. Type 2 subfamily.

The protein is Deoxyguanosinetriphosphate triphosphohydrolase-like protein of Bordetella parapertussis (strain 12822 / ATCC BAA-587 / NCTC 13253).